A 307-amino-acid polypeptide reads, in one-letter code: Acetaldehyde dehydrogenase (307 aa).

Residue 12–15 (SGNI) coordinates NAD(+). The active-site Acyl-thioester intermediate is Cys-130. NAD(+) contacts are provided by residues 161–169 (SVGPGTRQN) and Asn-272.

The protein belongs to the acetaldehyde dehydrogenase family.

The catalysed reaction is acetaldehyde + NAD(+) + CoA = acetyl-CoA + NADH + H(+). This Shewanella halifaxensis (strain HAW-EB4) protein is Acetaldehyde dehydrogenase.